Consider the following 414-residue polypeptide: Protein PHLOEM PROTEIN 2-LIKE A10 (414 aa).

The next 2 membrane-spanning stretches (helical) occupy residues 20 to 40 (WLIF…VYHL) and 379 to 399 (YVGA…LHII).

Its subcellular location is the membrane. The protein is Protein PHLOEM PROTEIN 2-LIKE A10 (PP2A10) of Arabidopsis thaliana (Mouse-ear cress).